The primary structure comprises 240 residues: Urease accessory protein UreF (240 aa).

Belongs to the UreF family. As to quaternary structure, ureD, UreF and UreG form a complex that acts as a GTP-hydrolysis-dependent molecular chaperone, activating the urease apoprotein by helping to assemble the nickel containing metallocenter of UreC. The UreE protein probably delivers the nickel.

The protein localises to the cytoplasm. Its function is as follows. Required for maturation of urease via the functional incorporation of the urease nickel metallocenter. The sequence is that of Urease accessory protein UreF from Rhodopseudomonas palustris (strain TIE-1).